The chain runs to 155 residues: RING finger protein 122 (155 aa).

A helical membrane pass occupies residues valine 40 to isoleucine 60. An RING-type; atypical zinc finger spans residues cysteine 93 to asparagine 134.

As to expression, widely expressed in several tissues and cell lines.

Its subcellular location is the golgi apparatus. The protein localises to the endoplasmic reticulum. The protein resides in the membrane. In terms of biological role, may induce necrosis and apoptosis. May play a role in cell viability. This Homo sapiens (Human) protein is RING finger protein 122 (RNF122).